Reading from the N-terminus, the 396-residue chain is Acetate kinase (396 aa).

N7 is a Mg(2+) binding site. K14 contributes to the ATP binding site. R88 contacts substrate. D145 (proton donor/acceptor) is an active-site residue. ATP is bound by residues 205–209, 279–281, and 327–331; these read HLGNG, DFR, and GIGEN. E381 provides a ligand contact to Mg(2+).

The protein belongs to the acetokinase family. Homodimer. Requires Mg(2+) as cofactor. Mn(2+) is required as a cofactor.

It is found in the cytoplasm. It catalyses the reaction acetate + ATP = acetyl phosphate + ADP. It participates in metabolic intermediate biosynthesis; acetyl-CoA biosynthesis; acetyl-CoA from acetate: step 1/2. In terms of biological role, catalyzes the formation of acetyl phosphate from acetate and ATP. Can also catalyze the reverse reaction. The polypeptide is Acetate kinase (Campylobacter jejuni subsp. jejuni serotype O:2 (strain ATCC 700819 / NCTC 11168)).